The primary structure comprises 828 residues: Kinesin-associated protein 3 (828 aa).

3 ARM repeats span residues 332-372, 373-411, and 577-611; these read YVEN…NLSF, DTDL…HVSQ, and DDSC…CQIV.

As to quaternary structure, heterotrimer of a 115 kDa subunit (KAP115) and two kinesin-like subunits of 95 kDa (KRP95) and 85 kDa (KRP85).

In terms of biological role, binds to the tail domain of the KRP85/KRP95 heterodimer to form a heterotrimeric kinesin-II complex and may regulate the spindle vesicle targeting of this complex. The sequence is that of Kinesin-associated protein 3 (KAP115) from Strongylocentrotus purpuratus (Purple sea urchin).